A 46-amino-acid polypeptide reads, in one-letter code: uncharacterized protein (46 aa).

The protein localises to the mitochondrion. This is an uncharacterized protein from Saccharomyces cerevisiae (strain ATCC 204508 / S288c) (Baker's yeast).